The following is a 286-amino-acid chain: MTTIIDGKALAKKINSQTKELVAQLKEKQNIIPGIAVVIAGDDVASLIYTRNKHNKAIKLGINSVLKKFPADVSQAELLAEIEKLNHDDTIDAILVQQPLPPQLDPEVITNAILPTKDVDGLNPLNLGKLFANQHGNYPVACTPRGIMRMLAEYNIDLQGKNAVIVGRSILVGKPLLALLNNANATVTMAGRSTGDLSALTKTADILIVATGVPNLIKATDVKPGAVVIDVGINRLSNGKLTGDVDFEAVKTKAQAITPVPGGVGPMTIATLMEQTVDLAWWRHHG.

NADP(+) is bound by residues 167–169 (GRS) and isoleucine 233.

It belongs to the tetrahydrofolate dehydrogenase/cyclohydrolase family. Homodimer.

It catalyses the reaction (6R)-5,10-methylene-5,6,7,8-tetrahydrofolate + NADP(+) = (6R)-5,10-methenyltetrahydrofolate + NADPH. The catalysed reaction is (6R)-5,10-methenyltetrahydrofolate + H2O = (6R)-10-formyltetrahydrofolate + H(+). It functions in the pathway one-carbon metabolism; tetrahydrofolate interconversion. Functionally, catalyzes the oxidation of 5,10-methylenetetrahydrofolate to 5,10-methenyltetrahydrofolate and then the hydrolysis of 5,10-methenyltetrahydrofolate to 10-formyltetrahydrofolate. This is Bifunctional protein FolD from Limosilactobacillus reuteri (strain DSM 20016) (Lactobacillus reuteri).